The following is a 495-amino-acid chain: PXA domain protein 1 (495 aa).

A PXA domain is found at 1 to 174 (MAKLSSLLNP…KFIIYLSKAI (174 aa)). The next 2 membrane-spanning stretches (helical) occupy residues 7-27 (LLNP…YSGI) and 235-255 (WFFF…FVAE). Polar residues-rich tracts occupy residues 402 to 419 (AVSS…QRSF) and 427 to 436 (DSQTPSENSA). The interval 402 to 436 (AVSSPTKANTNKSHQRSFSIPKATKDSQTPSENSA) is disordered. The helical transmembrane segment at 446 to 466 (AYSQIPVIPFFLPSDKLIMLV) threads the bilayer.

The protein localises to the endosome membrane. Functionally, required for required for normal vacuolar morphology and for vacuolar protein transport. Also required for endosome-to-Golgi protein transport. In Schizosaccharomyces pombe (strain 972 / ATCC 24843) (Fission yeast), this protein is PXA domain protein 1 (pxa1).